The primary structure comprises 481 residues: 4-O-methyl-glucuronoyl methylesterase (481 aa).

A signal peptide spans 1–21; the sequence is MVSQTVVSSLLVVLGAAGVRA. In terms of domain architecture, CBM1 spans 23–59; it reads QRQSLWGQCGGSGWSGPTLCVDGAWCNPQNQWYHQCI. Disulfide bonds link cysteine 108–cysteine 143, cysteine 292–cysteine 428, and cysteine 324–cysteine 400. Residues 291 to 296 carry the GXSYXG catalytic site motif motif; that stretch reads GCSRNG. Serine 293 acts as the Nucleophile in catalysis. Substrate is bound by residues lysine 297, glutamine 339, glutamate 347, and tryptophan 391. The active-site Proton donor/acceptor is the histidine 427.

Belongs to the carbohydrate esterase 15 (CE15) family.

It is found in the secreted. It carries out the reaction a 4-O-methyl-alpha-D-glucuronosyl ester derivative + H2O = 4-O-methyl-alpha-D-glucuronate derivative + an alcohol + H(+). In terms of biological role, glucuronoyl esterase which may play a significant role in biomass degradation, as it is considered to disconnect hemicellulose from lignin through the hydrolysis of the ester bond between 4-O-methyl-D-glucuronic acid residues of glucuronoxylans and aromatic alcohols of lignin. This is 4-O-methyl-glucuronoyl methylesterase from Podospora anserina (strain S / ATCC MYA-4624 / DSM 980 / FGSC 10383) (Pleurage anserina).